The primary structure comprises 151 residues: MAPRKGKVQKEEVQVQLGPQVLDGEKVFAVCHIYASYNDTFVHVTDLSGRETIVRITGGQKVKADRDESSPYAAMLAAQDVAEKCKSLGINCLHIKIRATGGNKTKTPGPGGQSALRALARAGMKIGRIEDVTPVPSDSTRRKGGRRGRRL.

Residues 129 to 151 form a disordered region; the sequence is IEDVTPVPSDSTRRKGGRRGRRL. Residues 142 to 151 show a composition bias toward basic residues; sequence RKGGRRGRRL.

Belongs to the universal ribosomal protein uS11 family.

The protein is Small ribosomal subunit protein uS11 (RPS14) of Procambarus clarkii (Red swamp crayfish).